We begin with the raw amino-acid sequence, 69 residues long: Cell division protein ZapB (69 aa).

Residues 6–68 (LEQLEARVQS…LGKMDQMNSE (63 aa)) adopt a coiled-coil conformation.

This sequence belongs to the ZapB family. In terms of assembly, homodimer. The ends of the coiled-coil dimer bind to each other, forming polymers. Interacts with FtsZ.

The protein resides in the cytoplasm. Non-essential, abundant cell division factor that is required for proper Z-ring formation. It is recruited early to the divisome by direct interaction with FtsZ, stimulating Z-ring assembly and thereby promoting cell division earlier in the cell cycle. Its recruitment to the Z-ring requires functional FtsA or ZipA. This Tolumonas auensis (strain DSM 9187 / NBRC 110442 / TA 4) protein is Cell division protein ZapB.